The following is a 368-amino-acid chain: Phosphate acyltransferase (368 aa).

It belongs to the PlsX family. As to quaternary structure, homodimer. Probably interacts with PlsY.

It localises to the cytoplasm. It carries out the reaction a fatty acyl-[ACP] + phosphate = an acyl phosphate + holo-[ACP]. It participates in lipid metabolism; phospholipid metabolism. In terms of biological role, catalyzes the reversible formation of acyl-phosphate (acyl-PO(4)) from acyl-[acyl-carrier-protein] (acyl-ACP). This enzyme utilizes acyl-ACP as fatty acyl donor, but not acyl-CoA. The polypeptide is Phosphate acyltransferase (Methylibium petroleiphilum (strain ATCC BAA-1232 / LMG 22953 / PM1)).